The following is a 367-amino-acid chain: 3-dehydroquinate synthase (367 aa).

NAD(+) is bound by residues 69–74, 103–107, 127–128, Lys140, and Lys149; these read DGEAFK, GVIGD, and TT. 3 residues coordinate Zn(2+): Glu182, His245, and His262.

Belongs to the sugar phosphate cyclases superfamily. Dehydroquinate synthase family. Requires Co(2+) as cofactor. Zn(2+) serves as cofactor. It depends on NAD(+) as a cofactor.

The protein resides in the cytoplasm. It carries out the reaction 7-phospho-2-dehydro-3-deoxy-D-arabino-heptonate = 3-dehydroquinate + phosphate. It participates in metabolic intermediate biosynthesis; chorismate biosynthesis; chorismate from D-erythrose 4-phosphate and phosphoenolpyruvate: step 2/7. In terms of biological role, catalyzes the conversion of 3-deoxy-D-arabino-heptulosonate 7-phosphate (DAHP) to dehydroquinate (DHQ). The protein is 3-dehydroquinate synthase of Pseudomonas savastanoi pv. phaseolicola (strain 1448A / Race 6) (Pseudomonas syringae pv. phaseolicola (strain 1448A / Race 6)).